A 342-amino-acid chain; its full sequence is Organic solute transporter alpha-like protein 2 (342 aa).

Over 1–50 (MLEISPWETLVKLLTDSLLNCTGTHEDVPHAKTFLRSLTTTYIASLAVAT) the chain is Extracellular. An N-linked (GlcNAc...) asparagine glycan is attached at N20. Residues 51–71 (AVTVGTVCLAVLHLIYIHFYI) form a helical membrane-spanning segment. Residues 72 to 79 (THSSRRLH) are Cytoplasmic-facing. A helical transmembrane segment spans residues 80–100 (IVLLACTAPLVSLLALVAMYM). Residues 101-109 (PRVWFLSHL) lie on the Extracellular side of the membrane. The helical transmembrane segment at 110–130 (LSFLYFSFALWVIICLLLHIF) threads the bilayer. Residues 131-176 (DGHHALVTKMMQRLQYVEIATPPFCCLFPCLPKVRLEGKKIRWCEL) lie on the Cytoplasmic side of the membrane. The helical transmembrane segment at 177 to 197 (MVMQAPIVRLFATLVSLVIYF) threads the bilayer. The Extracellular portion of the chain corresponds to 198 to 208 (EYQDQGLVPLK). A helical transmembrane segment spans residues 209–229 (VLDFITLPSLLAGIYGTHILV). Residues 230 to 243 (TTVSRMDELISYRY) lie on the Cytoplasmic side of the membrane. Residues 244–264 (VVVFRLLDFFFMVFGLQQPVF) form a helical membrane-spanning segment. Residues 265–290 (DFLARYGAFGCGTVLPAIETSFYWKN) lie on the Extracellular side of the membrane. A helical transmembrane segment spans residues 291 to 311 (FFTVIEAFCVTLISTVLLQPS). The Cytoplasmic portion of the chain corresponds to 312–342 (KSSFFDKHPSCRSMSSARSTITDVDTDESTT).

The protein belongs to the OST-alpha family.

The protein resides in the cell membrane. In terms of biological role, probable transporter. The chain is Organic solute transporter alpha-like protein 2 (osta-2) from Caenorhabditis elegans.